Reading from the N-terminus, the 232-residue chain is Sugar fermentation stimulation protein homolog (232 aa).

Belongs to the SfsA family.

The polypeptide is Sugar fermentation stimulation protein homolog (Brucella anthropi (strain ATCC 49188 / DSM 6882 / CCUG 24695 / JCM 21032 / LMG 3331 / NBRC 15819 / NCTC 12168 / Alc 37) (Ochrobactrum anthropi)).